The chain runs to 702 residues: Polyribonucleotide nucleotidyltransferase (702 aa).

Positions 485 and 491 each coordinate Mg(2+). In terms of domain architecture, KH spans 552-612 (PRTEIICIDP…EGVKKAISII (61 aa)). The 69-residue stretch at 622 to 690 (GEIYLGKVTK…NQGRINLSRK (69 aa)) folds into the S1 motif domain.

Belongs to the polyribonucleotide nucleotidyltransferase family. The cofactor is Mg(2+).

The protein resides in the cytoplasm. The catalysed reaction is RNA(n+1) + phosphate = RNA(n) + a ribonucleoside 5'-diphosphate. Involved in mRNA degradation. Catalyzes the phosphorolysis of single-stranded polyribonucleotides processively in the 3'- to 5'-direction. This is Polyribonucleotide nucleotidyltransferase from Clostridium botulinum (strain Kyoto / Type A2).